A 96-amino-acid chain; its full sequence is C-C motif chemokine 20 (96 aa).

Residues 1-26 (MMCSSKNLLLAALMSVLLLHFCSKSE) form the signal peptide. Intrachain disulfides connect Cys-32–Cys-58 and Cys-33–Cys-74.

Belongs to the intercrine beta (chemokine CC) family.

The protein resides in the secreted. Functionally, acts as a ligand for C-C chemokine receptor CCR6. Signals through binding and activation of CCR6 and induces a strong chemotactic response and mobilization of intracellular calcium ions. The ligand-receptor pair CCL20-CCR6 is responsible for the chemotaxis of dendritic cells (DC), effector/memory T-cells and B-cells and plays an important role at skin and mucosal surfaces under homeostatic and inflammatory conditions, as well as in pathology, including cancer and autoimmune diseases. CCL20 acts as a chemotactic factor that attracts lymphocytes and, slightly, neutrophils, but not monocytes. Involved in the recruitment of both the pro-inflammatory IL17 producing helper T-cells (Th17) and the regulatory T-cells (Treg) to sites of inflammation. Required for optimal migration of thymic natural regulatory T cells (nTregs) and DN1 early thymocyte progenitor cells. Positively regulates sperm motility and chemotaxis via its binding to CCR6 which triggers Ca2+ mobilization in the sperm which is important for its motility. May be involved in formation and function of the mucosal lymphoid tissues by attracting lymphocytes and dendritic cells towards epithelial cells. This chain is C-C motif chemokine 20 (CCL20), found in Bos taurus (Bovine).